Consider the following 248-residue polypeptide: Adenosylcobinamide-GDP ribazoletransferase (248 aa).

6 consecutive transmembrane segments (helical) span residues 36 to 56, 59 to 79, 114 to 134, 137 to 157, 170 to 190, and 199 to 219; these read FFLP…YLGL, FLPS…ITGG, GTIA…SLVL, YSIA…FLCL, IFIG…VLVL, and ATII…LLCL.

Belongs to the CobS family. Requires Mg(2+) as cofactor.

The protein resides in the cell membrane. The catalysed reaction is alpha-ribazole + adenosylcob(III)inamide-GDP = adenosylcob(III)alamin + GMP + H(+). It catalyses the reaction alpha-ribazole 5'-phosphate + adenosylcob(III)inamide-GDP = adenosylcob(III)alamin 5'-phosphate + GMP + H(+). It functions in the pathway cofactor biosynthesis; adenosylcobalamin biosynthesis; adenosylcobalamin from cob(II)yrinate a,c-diamide: step 7/7. Joins adenosylcobinamide-GDP and alpha-ribazole to generate adenosylcobalamin (Ado-cobalamin). Also synthesizes adenosylcobalamin 5'-phosphate from adenosylcobinamide-GDP and alpha-ribazole 5'-phosphate. This Clostridium botulinum (strain Loch Maree / Type A3) protein is Adenosylcobinamide-GDP ribazoletransferase.